The sequence spans 38 residues: Photosystem II reaction center protein L (38 aa).

The chain crosses the membrane as a helical span at residues 17–37 (SLFWGLLLIFILAVLFSSYFF).

Belongs to the PsbL family. PSII is composed of 1 copy each of membrane proteins PsbA, PsbB, PsbC, PsbD, PsbE, PsbF, PsbH, PsbI, PsbJ, PsbK, PsbL, PsbM, PsbT, PsbX, PsbY, PsbZ, Psb30/Ycf12, at least 3 peripheral proteins of the oxygen-evolving complex and a large number of cofactors. It forms dimeric complexes.

Its subcellular location is the plastid. It localises to the chloroplast thylakoid membrane. Functionally, one of the components of the core complex of photosystem II (PSII). PSII is a light-driven water:plastoquinone oxidoreductase that uses light energy to abstract electrons from H(2)O, generating O(2) and a proton gradient subsequently used for ATP formation. It consists of a core antenna complex that captures photons, and an electron transfer chain that converts photonic excitation into a charge separation. This subunit is found at the monomer-monomer interface and is required for correct PSII assembly and/or dimerization. This is Photosystem II reaction center protein L from Guillardia theta (Cryptophyte).